Consider the following 81-residue polypeptide: Acyl carrier protein (81 aa).

The region spanning 4–79 (AEIKDKVYDI…QAIDYIVNKK (76 aa)) is the Carrier domain. The residue at position 39 (Ser-39) is an O-(pantetheine 4'-phosphoryl)serine.

This sequence belongs to the acyl carrier protein (ACP) family. In terms of processing, 4'-phosphopantetheine is transferred from CoA to a specific serine of apo-ACP by AcpS. This modification is essential for activity because fatty acids are bound in thioester linkage to the sulfhydryl of the prosthetic group.

Its subcellular location is the cytoplasm. It functions in the pathway lipid metabolism; fatty acid biosynthesis. Functionally, carrier of the growing fatty acid chain in fatty acid biosynthesis. In Chlorobaculum tepidum (strain ATCC 49652 / DSM 12025 / NBRC 103806 / TLS) (Chlorobium tepidum), this protein is Acyl carrier protein.